The sequence spans 157 residues: Glutathione peroxidase homolog BsaA (157 aa).

Residue C35 is part of the active site.

This sequence belongs to the glutathione peroxidase family.

This is Glutathione peroxidase homolog BsaA (bsaA) from Halalkalibacterium halodurans (strain ATCC BAA-125 / DSM 18197 / FERM 7344 / JCM 9153 / C-125) (Bacillus halodurans).